The primary structure comprises 241 residues: MATLTAKNLAKAYKGRRVVEDVSLTVNSGEIVGLLGPNGAGKTTTFYMVVGIVPRDAGNIIIDDDDISLLPLHARARRGIGYLPQEASIFRRLSVYDNLMAVLQIRDDLSAEQREDRANELMEEFHIEHLRDSMGQSLSGGERRRVEIARALAANPKFILLDEPFAGVDPISVIDIKRIIEHLRDSGLGVLITDHNVRETLAVCERAYIVSQGHLIAHGTPTEILQDEHVKRVYLGEDFRL.

Residues 4–237 form the ABC transporter domain; sequence LTAKNLAKAY…EHVKRVYLGE (234 aa). ATP is bound at residue 36–43; the sequence is GPNGAGKT.

This sequence belongs to the ABC transporter superfamily. Outer membrane lipopolysaccharide export (TC 1.B.42) family. In terms of assembly, component of the lipopolysaccharide transport and assembly complex. The LptBFG transporter is composed of two ATP-binding proteins (LptB) and two transmembrane proteins (LptF and LptG).

The protein resides in the cytoplasm. It localises to the cell inner membrane. In terms of biological role, part of the ABC transporter complex LptBFG involved in the translocation of lipopolysaccharide (LPS) from the inner membrane to the outer membrane. Probably responsible for energy coupling to the transport system. This chain is Lipopolysaccharide export system ATP-binding protein LptB (lptB), found in Escherichia coli O157:H7.